Reading from the N-terminus, the 591-residue chain is Proteasome-associated ATPase (591 aa).

Residues 10-77 (VAAAEELHAL…LREEVDRLGQ (68 aa)) adopt a coiled-coil conformation. 278-283 (GCGKTL) provides a ligand contact to ATP. Residues 590-591 (YL) are docks into pockets in the proteasome alpha-ring.

It belongs to the AAA ATPase family. Homohexamer. Assembles into a hexameric ring structure that likely caps the 20S proteasome core. Can form a complex composed of two stacked hexameric rings in vitro. Probably interacts with the prokaryotic ubiquitin-like protein Pup through a hydrophobic interface; the expected interacting region of ARC lies in its N-terminal coiled-coil domain. There is likely one Pup binding site per ARC hexamer ring. Upon ATP-binding, the C-terminus of ARC probably interacts with the alpha-rings of the proteasome core, possibly by binding to the intersubunit pockets.

It participates in protein degradation; proteasomal Pup-dependent pathway. ATPase activity is inhibited by N-ethylmaleimide (NEM) but not by sodium azide. ATPase which is responsible for recognizing, binding, unfolding and translocation of pupylated proteins into the bacterial 20S proteasome core particle. May be essential for opening the gate of the 20S proteasome via an interaction with its C-terminus, thereby allowing substrate entry and access to the site of proteolysis. Thus, the C-termini of the proteasomal ATPase may function like a 'key in a lock' to induce gate opening and therefore regulate proteolysis. The sequence is that of Proteasome-associated ATPase from Rhodococcus erythropolis (Arthrobacter picolinophilus).